Consider the following 152-residue polypeptide: Ribosome maturation factor RimP (152 aa).

It belongs to the RimP family.

It is found in the cytoplasm. In terms of biological role, required for maturation of 30S ribosomal subunits. The protein is Ribosome maturation factor RimP of Desulfitobacterium hafniense (strain Y51).